Consider the following 199-residue polypeptide: Protein-methionine-sulfoxide reductase heme-binding subunit MsrQ (199 aa).

5 consecutive transmembrane segments (helical) span residues 13–33, 79–99, 120–140, 147–167, and 169–189; these read VLLH…VDQG, LLGL…ALLE, LGVI…QIMM, WQKL…HYLW, and VKTL…LLLF.

Belongs to the MsrQ family. Heterodimer of a catalytic subunit (MsrP) and a heme-binding subunit (MsrQ). It depends on FMN as a cofactor. Heme b serves as cofactor.

It localises to the cell inner membrane. Its function is as follows. Part of the MsrPQ system that repairs oxidized periplasmic proteins containing methionine sulfoxide residues (Met-O), using respiratory chain electrons. Thus protects these proteins from oxidative-stress damage caused by reactive species of oxygen and chlorine generated by the host defense mechanisms. MsrPQ is essential for the maintenance of envelope integrity under bleach stress, rescuing a wide series of structurally unrelated periplasmic proteins from methionine oxidation. MsrQ provides electrons for reduction to the reductase catalytic subunit MsrP, using the quinone pool of the respiratory chain. The chain is Protein-methionine-sulfoxide reductase heme-binding subunit MsrQ from Pectobacterium carotovorum subsp. carotovorum (strain PC1).